Here is a 793-residue protein sequence, read N- to C-terminus: Neurobeachin (793 aa).

Disordered stretches follow at residues 68-92 (ENIK…TGAK) and 685-793 (RETA…EILK). 4 stretches are compositionally biased toward polar residues: residues 77 to 90 (NVST…QTTG), 689 to 710 (RSGS…STET), 750 to 762 (NILN…TSTG), and 782 to 793 (ESLTESPSEILK).

The protein belongs to the WD repeat neurobeachin family. As to quaternary structure, interacts with RII subunit of PKA. Forebrain and cerebellum.

The protein localises to the cytoplasm. It is found in the membrane. Functionally, binds to type II regulatory subunits of protein kinase A and anchors/targets them to the membrane. May anchor the kinase to cytoskeletal and/or organelle-associated proteins. This chain is Neurobeachin (NBEA), found in Gallus gallus (Chicken).